Consider the following 374-residue polypeptide: Putative L-lysine 2,3-aminomutase aq_1632 (374 aa).

In terms of domain architecture, Radical SAM core spans 86–314 (HKYPDTALLL…ARVRYVMSHE (229 aa)). [4Fe-4S] cluster contacts are provided by cysteine 100, cysteine 104, and cysteine 107. Lysine 317 is subject to N6-(pyridoxal phosphate)lysine.

Belongs to the radical SAM superfamily. KamA family. [4Fe-4S] cluster is required as a cofactor. Pyridoxal 5'-phosphate serves as cofactor.

The polypeptide is Putative L-lysine 2,3-aminomutase aq_1632 (Aquifex aeolicus (strain VF5)).